Consider the following 401-residue polypeptide: MNVFNPAQFRAQFPALQDAGVYLDSAATALKPEAVVEATQQFYSLSAGNVHRSQFAEAQRLTARYEAAREKVAQLLNAPDDKTIVWTRGTTESINMVAQCYARPRLQPGDEIIVSVAEHHANLVPWLMVAQQTGAKVVKLPLNAQRLPDVDLLPELITPRSRILALGQMSNVTGGCPDLARAITFAHSAGMVVMVDGAQGAVHFPADVQQLDIDFYAFSGHKLYGPTGIGVLYGKSELLEAMSPWLGGGKMVHEVSFDGFTTQSAPWKLEAGTPNVAGVIGLSAALEWLADYDINQAESWSRSLATLAEDALAKRPGFRSFRCQDSSLLAFDFAGVHHSDMVTLLAEYGIALRAGQHCAQPLLAELGVTGTLRASFAPYNTKSDVDALVNAVDRALELLVD.

At lysine 222 the chain carries N6-(pyridoxal phosphate)lysine. The Cysteine persulfide intermediate role is filled by cysteine 358.

The protein belongs to the class-V pyridoxal-phosphate-dependent aminotransferase family. Csd subfamily. As to quaternary structure, homodimer. Forms a heterodimer with CsdE. Pyridoxal 5'-phosphate serves as cofactor.

It carries out the reaction (sulfur carrier)-H + L-cysteine = (sulfur carrier)-SH + L-alanine. It catalyses the reaction L-selenocysteine + AH2 = hydrogenselenide + L-alanine + A + H(+). The catalysed reaction is 3-sulfino-L-alanine + H2O = sulfite + L-alanine + H(+). Cysteine desulfurase activity is increased 2-fold in the presence of CsdE. In terms of biological role, catalyzes the removal of elemental sulfur and selenium atoms from L-cysteine, L-cystine, L-selenocysteine, and L-selenocystine to produce L-alanine, and transiently retains the released sulfur atom on a cysteine residue, in the form of a persulfide. Can also desulfinate L-cysteine sulfinate (3-sulfino-L-alanine), which is the best substrate of the enzyme. Functions as a selenium delivery protein in the pathway for the biosynthesis of selenophosphate. Seems to participate in Fe/S biogenesis by recruiting the SufBCD-SufE proteins. Transfers sulfur to CsdE that increases the cysteine desulfurase activity of CsdA. Can also transfer sulfur directly to TcdA/CsdL in vitro. Appears to support the function of TcdA in the generation of cyclic threonylcarbamoyladenosine at position 37 (ct(6)A37) in tRNAs that read codons beginning with adenine. This is Cysteine desulfurase CsdA (csdA) from Escherichia coli (strain K12).